Here is a 163-residue protein sequence, read N- to C-terminus: UPF0763 protein C8J_0930 (163 aa).

This sequence belongs to the UPF0763 family.

The protein is UPF0763 protein C8J_0930 of Campylobacter jejuni subsp. jejuni serotype O:6 (strain 81116 / NCTC 11828).